The chain runs to 196 residues: Dehydrogenase RED3 (196 aa).

6 residues coordinate NADP(+): S47, D74, N101, R134, Y166, and K170. Y166 serves as the catalytic Proton acceptor. K170 functions as the Lowers pKa of active site Tyr in the catalytic mechanism.

Belongs to the short-chain dehydrogenases/reductases (SDR) family.

It carries out the reaction a primary alcohol + NAD(+) = an aldehyde + NADH + H(+). The enzyme catalyses a secondary alcohol + NAD(+) = a ketone + NADH + H(+). Its pathway is mycotoxin biosynthesis. In terms of biological role, dehydrogenase; part of the Tox1B locus, one of the 2 loci that mediate the biosynthesis of T-toxin, a family of linear polyketides 37 to 45 carbons in length, of which the major component is 41 carbons, and which leads to high virulence to maize. One of the PKSs (PKS1 or PKS2) could synthesize a precursor, used subsequently by the other PKS as starter unit, to add additional carbons. Variability in the length of the final carbon backbone C35-47 could be achieved by varying the number of condensation cycles, or use of different starter or extender units or might be due to decarboxylation of the penultimate product, catalyzed by DEC1. Additional proteins are required for the biosynthesis of T-toxin, including oxidoreductases RED1, RED2, RED3, LAM1 and OXI1, as well as esterase TOX9. In Cochliobolus heterostrophus (strain C4 / ATCC 48331 / race T) (Southern corn leaf blight fungus), this protein is Dehydrogenase RED3.